A 338-amino-acid chain; its full sequence is Anthranilate phosphoribosyltransferase (338 aa).

Residues glycine 81, 84–85, threonine 89, 91–94, 109–117, and serine 121 each bind 5-phospho-alpha-D-ribose 1-diphosphate; these read GD, NVST, and KHGNRSVSS. Residue glycine 81 coordinates anthranilate. Position 93 (serine 93) interacts with Mg(2+). Asparagine 112 is a binding site for anthranilate. Residue arginine 167 participates in anthranilate binding. Mg(2+) contacts are provided by aspartate 226 and glutamate 227.

It belongs to the anthranilate phosphoribosyltransferase family. In terms of assembly, homodimer. It depends on Mg(2+) as a cofactor.

It catalyses the reaction N-(5-phospho-beta-D-ribosyl)anthranilate + diphosphate = 5-phospho-alpha-D-ribose 1-diphosphate + anthranilate. The protein operates within amino-acid biosynthesis; L-tryptophan biosynthesis; L-tryptophan from chorismate: step 2/5. In terms of biological role, catalyzes the transfer of the phosphoribosyl group of 5-phosphorylribose-1-pyrophosphate (PRPP) to anthranilate to yield N-(5'-phosphoribosyl)-anthranilate (PRA). This is Anthranilate phosphoribosyltransferase from Alkalilimnicola ehrlichii (strain ATCC BAA-1101 / DSM 17681 / MLHE-1).